The following is a 323-amino-acid chain: MFKRLRRLRSSENLRAMVRETRLNINDFIAPLFVIESDSGIKNEISSMPGVYQMSIEPLLKECEELVGLGIKAVLLFGIPKHKDATGSHALNKDHIVAKATREIKKRFKDLIVIADLCFCEYTDHGHCGILENASVSNDKTLKILNLQGLILAESGVDILAPSNMMDGNVLSLRKALDKAGYFHTPIMSYSTKFASSYYGPFRDVANSPPSFGDRKSYQMDYANQKEALLESLEDEKQGADILMVKPALAYLDIVKEIRDHTLLPLALYNVSGEYAMLKLAQKHNLINYESVLLETMTCFKRAGADMIISYHAKEVANLLQRN.

Zn(2+)-binding residues include C118, C120, and C128. The active-site Schiff-base intermediate with substrate is the K193. R203 and R215 together coordinate 5-aminolevulinate. E231 contributes to the Mg(2+) binding site. K246 serves as the catalytic Schiff-base intermediate with substrate. The 5-aminolevulinate site is built by S272 and Y311.

Belongs to the ALAD family. Homooctamer. Zn(2+) serves as cofactor.

The enzyme catalyses 2 5-aminolevulinate = porphobilinogen + 2 H2O + H(+). Its pathway is porphyrin-containing compound metabolism; protoporphyrin-IX biosynthesis; coproporphyrinogen-III from 5-aminolevulinate: step 1/4. Its function is as follows. Catalyzes an early step in the biosynthesis of tetrapyrroles. Binds two molecules of 5-aminolevulinate per subunit, each at a distinct site, and catalyzes their condensation to form porphobilinogen. This chain is Delta-aminolevulinic acid dehydratase (hemB), found in Helicobacter pylori (strain J99 / ATCC 700824) (Campylobacter pylori J99).